Consider the following 266-residue polypeptide: 14-3-3 protein homolog (266 aa).

Positions 154-177 (KQAADQAQESYQKATETAEGHSPA) are disordered. The segment covering 158–168 (DQAQESYQKAT) has biased composition (polar residues).

The protein belongs to the 14-3-3 family.

This Neospora caninum (Coccidian parasite) protein is 14-3-3 protein homolog.